Reading from the N-terminus, the 92-residue chain is Small ribosomal subunit protein bS20 (92 aa).

It belongs to the bacterial ribosomal protein bS20 family.

Functionally, binds directly to 16S ribosomal RNA. This is Small ribosomal subunit protein bS20 from Persephonella marina (strain DSM 14350 / EX-H1).